Reading from the N-terminus, the 557-residue chain is Hdr-like menaquinol oxidoreductase iron-sulfur subunit (557 aa).

2 consecutive 4Fe-4S ferredoxin-type domains span residues 86–115 and 155–184; these read RAFKVFMDICVRCGACADKCHYYIGTGDPK and KEWYYYLLQCSLCRRCSLFCPYGIDTAEVV. 8 residues coordinate [4Fe-4S] cluster: C95, C98, C101, C105, C164, C167, C170, and C174.

Requires [4Fe-4S] cluster as cofactor.

The protein resides in the membrane. In terms of biological role, has menaquinol-oxidizing activity. The HmeC and HmeD subunits may together mediate electron transfer from menaquinol to an unidentified electron acceptor on the cytoplasmic side of the membrane. The chain is Hdr-like menaquinol oxidoreductase iron-sulfur subunit (hmeD) from Archaeoglobus profundus (strain DSM 5631 / JCM 9629 / NBRC 100127 / Av18).